The primary structure comprises 191 residues: dITP/XTP pyrophosphatase (191 aa).

8 to 13 (SKNQGK) serves as a coordination point for substrate. E38 and D67 together coordinate Mg(2+). Residue D67 is the Proton acceptor of the active site. Substrate-binding positions include S68, 146-149 (FGYD), K169, and 174-175 (HR).

This sequence belongs to the HAM1 NTPase family. In terms of assembly, homodimer. The cofactor is Mg(2+).

It carries out the reaction XTP + H2O = XMP + diphosphate + H(+). The catalysed reaction is dITP + H2O = dIMP + diphosphate + H(+). The enzyme catalyses ITP + H2O = IMP + diphosphate + H(+). Its function is as follows. Pyrophosphatase that catalyzes the hydrolysis of nucleoside triphosphates to their monophosphate derivatives, with a high preference for the non-canonical purine nucleotides XTP (xanthosine triphosphate), dITP (deoxyinosine triphosphate) and ITP. Seems to function as a house-cleaning enzyme that removes non-canonical purine nucleotides from the nucleotide pool, thus preventing their incorporation into DNA/RNA and avoiding chromosomal lesions. The sequence is that of dITP/XTP pyrophosphatase from Prochlorococcus marinus subsp. pastoris (strain CCMP1986 / NIES-2087 / MED4).